A 206-amino-acid polypeptide reads, in one-letter code: Accelerated cell death 11 (206 aa).

An N-acylsphingoid base 1-phosphate is bound by residues Asp60, Lys64, Arg99, Arg103, and His143.

The protein belongs to the GLTP family. As to quaternary structure, interacts with BPA1, PRA1F2 and PRA1F3.

The protein localises to the cytoplasm. Functionally, exhibits selective intermembrane transfer of ceramide-1-phosphate (C1P) and phytoceramide-1-phosphate. Does not transport ceramide (Cer) or GalCer, suggesting a requirement for phosphate in the headgroup for functionality. Transports in vitro sphingosine, but not glycosphingolipids. Also has some in vitro activity with sphingomyelin, a lipid not detected in plant tissues. The transport function may be not directly involved in regulating cell death. Rather, perturbations in the function of ACD11 or related components could be monitored by R-proteins, which then mediate defense and programmed cell death (PCD), as proposed in the guard hypothesis. C1P transfer is stimulated by phosphatidylserine in C1P source vesicles. Regulates autophagy, inflammasome mediated IL1B and IL18 processing, and pyroptosis, but not apoptosis. This is Accelerated cell death 11 from Arabidopsis thaliana (Mouse-ear cress).